The chain runs to 931 residues: Isoleucine--tRNA ligase (931 aa).

The 'HIGH' region motif lies at 58-68 (PYANGHLHCGH). Glu559 is a binding site for L-isoleucyl-5'-AMP. Residues 600-604 (KLSKS) carry the 'KMSKS' region motif. Lys603 contributes to the ATP binding site. Residues Cys894, Cys897, Cys914, and Cys917 each contribute to the Zn(2+) site.

Belongs to the class-I aminoacyl-tRNA synthetase family. IleS type 1 subfamily. Monomer. It depends on Zn(2+) as a cofactor.

Its subcellular location is the cytoplasm. The catalysed reaction is tRNA(Ile) + L-isoleucine + ATP = L-isoleucyl-tRNA(Ile) + AMP + diphosphate. Its function is as follows. Catalyzes the attachment of isoleucine to tRNA(Ile). As IleRS can inadvertently accommodate and process structurally similar amino acids such as valine, to avoid such errors it has two additional distinct tRNA(Ile)-dependent editing activities. One activity is designated as 'pretransfer' editing and involves the hydrolysis of activated Val-AMP. The other activity is designated 'posttransfer' editing and involves deacylation of mischarged Val-tRNA(Ile). This Legionella pneumophila (strain Corby) protein is Isoleucine--tRNA ligase.